The following is a 1040-amino-acid chain: Contactin-2 (1040 aa).

The N-terminal stretch at 1 to 30 is a signal peptide; it reads MGAPARKRASLLLLLLATMALVSSPGWSFS. Ig-like C2-type domains lie at 39 to 130, 135 to 224, 241 to 324, 329 to 413, 419 to 506, and 511 to 605; these read PVFE…AVLR, QEFS…SVFS, PSIK…GRII, PEWL…AELA, PDFR…GILS, and TKIT…ATVL. Disulfide bonds link Cys-63–Cys-113, Cys-157–Cys-209, Cys-263–Cys-308, and Cys-350–Cys-397. N-linked (GlcNAc...) asparagine glycans are attached at residues Asn-78, Asn-200, and Asn-206. 4 N-linked (GlcNAc...) asparagine glycosylation sites follow: Asn-463, Asn-479, Asn-500, and Asn-527. 4 consecutive Fibronectin type-III domains span residues 612 to 710, 715 to 812, 817 to 913, and 917 to 1008; these read PPGG…TKEA, APSG…SAEE, APAK…MKPP, and PPGN…NGGT. N-linked (GlcNAc...) asparagine glycosylation occurs at Asn-777. The Cell attachment site motif lies at 796–798; the sequence is RGD. 3 N-linked (GlcNAc...) asparagine glycosylation sites follow: Asn-832, Asn-920, and Asn-942. The segment at 897-922 is disordered; the sequence is GTGPASPSADAMTMKPPPRRPPGNIS. Residue Ser-1014 is the site of GPI-anchor amidated serine attachment. The propeptide at 1015–1040 is removed in mature form; the sequence is SAVRPAHPGPVFSCMVILMLAGCQRL.

Belongs to the immunoglobulin superfamily. Contactin family.

Its subcellular location is the cell membrane. Functionally, in conjunction with another transmembrane protein, CNTNAP2, contributes to the organization of axonal domains at nodes of Ranvier by maintaining voltage-gated potassium channels at the juxtaparanodal region. This chain is Contactin-2 (Cntn2), found in Mus musculus (Mouse).